The chain runs to 152 residues: Pseudo histidine-containing phosphotransfer protein 5 (152 aa).

An HPt domain is found at 38-140; it reads NPNFAEEVVS…ESYFQLLRQA (103 aa).

Functionally, functions as a two-component phosphorelay mediator between cytokinin sensor histidine kinases and response regulators (B-type ARRs). Plays an important role in propagating cytokinin signal transduction. The chain is Pseudo histidine-containing phosphotransfer protein 5 from Oryza sativa subsp. japonica (Rice).